An 82-amino-acid polypeptide reads, in one-letter code: Small ribosomal subunit protein eS27 (82 aa).

Residues 37 to 59 (CPGCFTITTVFSHAQTVVICQGC) form a C4-type zinc finger.

The protein belongs to the eukaryotic ribosomal protein eS27 family. Component of the small ribosomal subunit (SSU). Mature N.crassa ribosomes consist of a small (40S) and a large (60S) subunit. The 40S small subunit contains 1 molecule of ribosomal RNA (18S rRNA) and at least 32 different proteins. The large 60S subunit contains 3 rRNA molecules (26S, 5.8S and 5S rRNA) and at least 42 different proteins. Zn(2+) is required as a cofactor.

It localises to the cytoplasm. Component of the ribosome, a large ribonucleoprotein complex responsible for the synthesis of proteins in the cell. The small ribosomal subunit (SSU) binds messenger RNAs (mRNAs) and translates the encoded message by selecting cognate aminoacyl-transfer RNA (tRNA) molecules. The large subunit (LSU) contains the ribosomal catalytic site termed the peptidyl transferase center (PTC), which catalyzes the formation of peptide bonds, thereby polymerizing the amino acids delivered by tRNAs into a polypeptide chain. The nascent polypeptides leave the ribosome through a tunnel in the LSU and interact with protein factors that function in enzymatic processing, targeting, and the membrane insertion of nascent chains at the exit of the ribosomal tunnel. In Neurospora crassa (strain ATCC 24698 / 74-OR23-1A / CBS 708.71 / DSM 1257 / FGSC 987), this protein is Small ribosomal subunit protein eS27 (crp-6).